Here is a 349-residue protein sequence, read N- to C-terminus: Protein pelota homolog (349 aa).

The protein belongs to the eukaryotic release factor 1 family. Pelota subfamily. As to quaternary structure, monomer. Requires a divalent metal cation as cofactor.

Its subcellular location is the cytoplasm. In terms of biological role, may function in recognizing stalled ribosomes, interact with stem-loop structures in stalled mRNA molecules, and effect endonucleolytic cleavage of the mRNA. May play a role in the release non-functional ribosomes and degradation of damaged mRNAs. Has endoribonuclease activity. The protein is Protein pelota homolog of Nitrosopumilus maritimus (strain SCM1).